A 1666-amino-acid chain; its full sequence is Complement C3 (1666 aa).

Positions 1 to 22 (MGPAAGPSLLLLLLASVSLALG) are cleaved as a signal peptide. Phosphoserine is present on residues Ser-70, Ser-296, and Ser-302. Disulfide bonds link Cys-557/Cys-821, Cys-630/Cys-666, Cys-698/Cys-725, Cys-699/Cys-732, Cys-712/Cys-733, Cys-878/Cys-1517, Cys-1106/Cys-1163, Cys-1363/Cys-1493, Cys-1394/Cys-1462, Cys-1510/Cys-1515, Cys-1522/Cys-1593, Cys-1540/Cys-1664, and Cys-1640/Cys-1649. Ser-676 carries the phosphoserine modification. The Anaphylatoxin-like domain maps to 698-733 (CCEDGMRENPMQFSCQRRARYVSLGEACVKAFLDCC). The N-linked (GlcNAc...) asparagine glycan is linked to Asn-944. At Ser-973 the chain carries Phosphoserine. The segment at residues 1015–1018 (CGEQ) is a cross-link (isoglutamyl cysteine thioester (Cys-Gln)). Ser-1326 is subject to Phosphoserine. The NTR domain occupies 1522–1664 (CFIQLPEKIT…FTENMVVFGC (143 aa)). Ser-1576 carries the post-translational modification Phosphoserine. N-linked (GlcNAc...) asparagine glycosylation occurs at Asn-1620. Residues 1637–1662 (AEECQDEENQQQCQDLGTFTENMVVF) form an interaction with CFP/properdin region.

As to quaternary structure, in absence of complement activation, the C3 precursor is first processed by the removal of 4 Arg residues, forming two chains, beta and alpha, linked by a disulfide bond. In terms of assembly, complement C3b is composed of complement C3b and complement C3 beta chains that are associated via disulfide bonds. Non-enzymatic component of the C5 convertase, also named C4bC2bC3b, composed of the serine protease complement C2b (C2), complement C3b, as well as complement C4b (C4). Non-enzymatic component of the C5 convertase of the alternative complement pathways composed of the serine protease complement CFB and complement C3b. Interacts with CFP; interaction takes place together with CFB in the alternative complement system and allows the complex to become active. Interacts with CR1 (via Sushi 8 and Sushi 9 domains). Interacts with CFH. Interacts with CFH. Interacts with CR2. As to quaternary structure, during pregnancy, C3dg exists as a complex (probably a 2:2:2 heterohexamer) with AGT and the proform of PRG2. Interacts with CR2 (via the N-terminal Sushi domains 1 and 2). In terms of processing, C3 precursor is first processed by the removal of 4 Arg residues, forming two chains, beta and alpha, linked by a disulfide bond. During activation of the complement systems, the alpha chain is cleaved into C3a and C3b by the C3 convertase: C3b stays linked to the beta chain, while C3a is released in the plasma. The alpha chain is cleaved by the serine protease complement C2b component of the C3 convertase to generate C3a and C3b following activation by the classical, lectin and GZMK complement systems. The alpha chain is cleaved by CFB component of the C3 convertase to generate C3a and C3b following activation by the alternative complement system. Post-translationally, C3a is further processed by carboxypeptidases to release the C-terminal arginine residue generating the acylation stimulating protein (ASP). Levels of ASP are increased in adipocytes in the postprandial period and by insulin and dietary chylomicrons. Complement C3b is rapidly split in two positions by factor I (CFI) and a cofactor (CFH) to form iC3b (inactivated C3b) and C3f which is released. CFI and CFH catalyze proteolytic degradation of already-deposited complement C3b. Then iC3b is slowly cleaved (possibly by CFI) to form C3c (beta chain + alpha' chain fragment 1 + alpha' chain fragment 2), C3dg and C3f. Other proteases produce other fragments such as C3d or C3g. In terms of processing, upon activation, the internal thioester bond reacts with carbohydrate antigens on the target surface to form amide or ester bonds, leading to covalent association with the surface of pathogens. Post-translationally, complement C3b interacts with complement C4b via a thioester linkage. Phosphorylated by FAM20C in the extracellular medium.

The protein resides in the secreted. The protein localises to the cell surface. With respect to regulation, complement activation is inhibited by VSIG4. In terms of biological role, precursor of non-enzymatic components of the classical, alternative, lectin and GZMK complement pathways, which consist in a cascade of proteins that leads to phagocytosis and breakdown of pathogens and signaling that strengthens the adaptive immune system. Non-enzymatic component of C5 convertase. Generated following cleavage by C3 convertase, it covalently attaches to the surface of pathogens, where it acts as an opsonin that marks the surface of antigens for removal. Complement C3b binds covalently via its reactive thioester, to cell surface carbohydrates or immune aggregates. Together with complement C4b, it then recruits the serine protease complement C2b to form the C5 convertase, which cleaves and activate C5, the next component of the complement pathways. In the alternative complement pathway, recruits the serine protease CFB to form the C5 convertase that cleaves and activates C5. Functionally, mediator of local inflammatory process released following cleavage by C3 convertase. Acts by binding to its receptor, C3AR1, activating G protein-coupled receptor signaling, promoting the phosphorylation, ARRB2-mediated internalization and endocytosis of C3AR1. C3a anaphylatoxin stimulates the activation of immune cells such as mast cells and basophilic leukocytes to release inflammation agents, such as cytokines, chemokines and histamine, which promote inflammation development. Also acts as potent chemoattractant for the migration of macrophages and neutrophils to the inflamed tissues, resulting in neutralization of the inflammatory triggers by multiple ways, such as phagocytosis and generation of reactive oxidants. Its function is as follows. Adipogenic hormone that stimulates triglyceride synthesis and glucose transport in adipocytes, regulating fat storage and playing a role in postprandial triglyceride clearance. Appears to stimulate triglyceride synthesis via activation of the PLC, MAPK and AKT signaling pathways. Acts by binding to its receptor, C5AR2, activating G protein-coupled receptor signaling, promoting the phosphorylation, ARRB2-mediated internalization and endocytosis of C5AR2. In terms of biological role, acts as a chemoattractant for neutrophils in chronic inflammation. The chain is Complement C3 from Cavia porcellus (Guinea pig).